A 303-amino-acid chain; its full sequence is Glycine--tRNA ligase alpha subunit (303 aa).

It belongs to the class-II aminoacyl-tRNA synthetase family. In terms of assembly, tetramer of two alpha and two beta subunits.

The protein localises to the cytoplasm. The enzyme catalyses tRNA(Gly) + glycine + ATP = glycyl-tRNA(Gly) + AMP + diphosphate. The chain is Glycine--tRNA ligase alpha subunit from Enterobacter sp. (strain 638).